Reading from the N-terminus, the 713-residue chain is TWiK family of potassium channels protein 12 (713 aa).

The Cytoplasmic portion of the chain corresponds to 1-15 (MTLFKKIQWFCNLIR). A helical transmembrane segment spans residues 16 to 36 (LRSYYKFLLLIAYTAFGAWLF). 3 N-linked (GlcNAc...) asparagine glycosylation sites follow: N53, N77, and N98. Residues 112 to 132 (WTWTGAMFYAGQLYTTIGYGY) constitute an intramembrane region (pore-forming). Residues 142-162 (ICTIFYALFGIPCFLMYLKIE) form a helical membrane-spanning segment. The Cytoplasmic portion of the chain corresponds to 163–242 (NAIEWKKDKQ…AEERKKKPFP (80 aa)). Residues 243-263 (IPIAIIMLIIWICFSASMFCI) traverse the membrane as a helical segment. The pore-forming intramembrane region spans 267 to 287 (TWVFSSAVYFFIVSISTVGLG). Residues 298-318 (VFNFLLILVGLALLSMCFELI) form a helical membrane-spanning segment. The Cytoplasmic portion of the chain corresponds to 319-713 (TDRVAKWKQK…LSKRDASTMA (395 aa)).

Belongs to the two pore domain potassium channel (TC 1.A.1.8) family.

Its subcellular location is the membrane. In Caenorhabditis elegans, this protein is TWiK family of potassium channels protein 12 (twk-12).